The primary structure comprises 111 residues: Nucleoid-associated protein TTE0040 (111 aa).

This sequence belongs to the YbaB/EbfC family. In terms of assembly, homodimer.

It localises to the cytoplasm. Its subcellular location is the nucleoid. Binds to DNA and alters its conformation. May be involved in regulation of gene expression, nucleoid organization and DNA protection. This Caldanaerobacter subterraneus subsp. tengcongensis (strain DSM 15242 / JCM 11007 / NBRC 100824 / MB4) (Thermoanaerobacter tengcongensis) protein is Nucleoid-associated protein TTE0040.